Consider the following 34-residue polypeptide: Potassium channel toxin alpha-KTx 6 hetlaxin (34 aa).

4 cysteine pairs are disulfide-bonded: C3/C24, C9/C29, C13/C31, and C19/C34. C34 is modified (cysteine amide).

Post-translationally, contains 4 disulfide bonds. As to expression, expressed by the venom gland.

It is found in the secreted. Binds to voltage-gated potassium channels Kv1.3/KCNA3 (IC(50)=0.48 uM) and Kv1.1/KCNA1 (IC(50)=6.7 uM) and inhibits channel activity. In Heterometrus laoticus (Thai giant scorpion), this protein is Potassium channel toxin alpha-KTx 6 hetlaxin.